The sequence spans 603 residues: Elongation factor 4 (603 aa).

The 185-residue stretch at 7 to 191 (SNIRNFSIVA…AIVTRLPPPK (185 aa)) folds into the tr-type G domain. Residues 19-24 (DHGKST) and 138-141 (NKVD) contribute to the GTP site.

It belongs to the TRAFAC class translation factor GTPase superfamily. Classic translation factor GTPase family. LepA subfamily.

It localises to the cell inner membrane. It carries out the reaction GTP + H2O = GDP + phosphate + H(+). In terms of biological role, required for accurate and efficient protein synthesis under certain stress conditions. May act as a fidelity factor of the translation reaction, by catalyzing a one-codon backward translocation of tRNAs on improperly translocated ribosomes. Back-translocation proceeds from a post-translocation (POST) complex to a pre-translocation (PRE) complex, thus giving elongation factor G a second chance to translocate the tRNAs correctly. Binds to ribosomes in a GTP-dependent manner. This is Elongation factor 4 from Bradyrhizobium diazoefficiens (strain JCM 10833 / BCRC 13528 / IAM 13628 / NBRC 14792 / USDA 110).